The following is a 136-amino-acid chain: Large ribosomal subunit protein uL16 (136 aa).

The protein belongs to the universal ribosomal protein uL16 family. Part of the 50S ribosomal subunit.

Its function is as follows. Binds 23S rRNA and is also seen to make contacts with the A and possibly P site tRNAs. In Orientia tsutsugamushi (strain Boryong) (Rickettsia tsutsugamushi), this protein is Large ribosomal subunit protein uL16.